A 101-amino-acid polypeptide reads, in one-letter code: Phosphoribosyl-AMP cyclohydrolase (101 aa).

D71 is a Mg(2+) binding site. C72 is a binding site for Zn(2+). Mg(2+) contacts are provided by D73 and D75. Zn(2+) contacts are provided by C88 and C95.

Belongs to the PRA-CH family. Homodimer. It depends on Mg(2+) as a cofactor. Zn(2+) is required as a cofactor.

The protein resides in the cytoplasm. It catalyses the reaction 1-(5-phospho-beta-D-ribosyl)-5'-AMP + H2O = 1-(5-phospho-beta-D-ribosyl)-5-[(5-phospho-beta-D-ribosylamino)methylideneamino]imidazole-4-carboxamide. It participates in amino-acid biosynthesis; L-histidine biosynthesis; L-histidine from 5-phospho-alpha-D-ribose 1-diphosphate: step 3/9. Catalyzes the hydrolysis of the adenine ring of phosphoribosyl-AMP. The sequence is that of Phosphoribosyl-AMP cyclohydrolase from Bacillus cereus (strain AH820).